The sequence spans 488 residues: 3-octaprenyl-4-hydroxybenzoate carboxy-lyase (488 aa).

Asn-172 serves as a coordination point for Mn(2+). Residues 175-177 (IYR), 189-191 (RWL), and 194-195 (RG) each bind prenylated FMN. Glu-238 serves as a coordination point for Mn(2+). Asp-287 (proton donor) is an active-site residue.

The protein belongs to the UbiD family. As to quaternary structure, homohexamer. It depends on prenylated FMN as a cofactor. The cofactor is Mn(2+).

Its subcellular location is the cell membrane. It carries out the reaction a 4-hydroxy-3-(all-trans-polyprenyl)benzoate + H(+) = a 2-(all-trans-polyprenyl)phenol + CO2. It functions in the pathway cofactor biosynthesis; ubiquinone biosynthesis. Its function is as follows. Catalyzes the decarboxylation of 3-octaprenyl-4-hydroxy benzoate to 2-octaprenylphenol, an intermediate step in ubiquinone biosynthesis. The chain is 3-octaprenyl-4-hydroxybenzoate carboxy-lyase from Stutzerimonas stutzeri (strain A1501) (Pseudomonas stutzeri).